We begin with the raw amino-acid sequence, 233 residues long: Eukaryotic translation initiation factor 4E-1 (233 aa).

Residues 1–51 are disordered; the sequence is MVVEDALKTSASEDQAKTETNPKPREEDDEPEEGEIVGDEESASKPSKGIA. Residues 14–26 show a composition bias toward basic and acidic residues; sequence DQAKTETNPKPRE. Acidic residues predominate over residues 27 to 41; sequence EDDEPEEGEIVGDEE. EIF4G-binding regions lie at residues 55 to 58 and 65 to 104; these read HALE and FDSPAAKSAKTKQEDWGSSIRPIYTFSTVEEFWSIYNNIR. MRNA contacts are provided by residues 76–81, lysine 108, and 126–127; these read KQEDWG and WE. A disulfide bridge links cysteine 131 with cysteine 169. Residues 152–161 form an EIF4G-binding region; that stretch reads YTLLGMIGEQ. Residues 176-181 and 221-225 contribute to the mRNA site; these read RNRQEK and MRHER.

The protein belongs to the eukaryotic initiation factor 4E family. As to quaternary structure, EIF4F is a multi-subunit complex, the composition of which varies with external and internal environmental conditions. It is composed of at least EIF4A, EIF4E and EIF4G. EIF4E is also known to interact with other partners. In higher plants two isoforms of EIF4F have been identified, named isoform EIF4F and isoform EIF(iso)4F. Isoform EIF4F has subunits p220 and p26, whereas isoform EIF(iso)4F has subunits p82 and p28. (Microbial infection) Does not interact with the VPg of Plum pox virus (PPV) strain D. In terms of processing, according to the redox status, the Cys-131-Cys-169 disulfide bridge may have a role in regulating protein function by affecting its ability to bind capped mRNA. In terms of tissue distribution, mostly expressed in leaves, flower buds, leaf buds and anthers, to a lower extent in roots, stems and green immature fruit, and, at low levels, in petals.

It localises to the nucleus. The protein localises to the cytoplasm. Component of the protein complex eIF4F, which is involved in the recognition of the mRNA cap, ATP-dependent unwinding of 5'-terminal secondary structure and recruitment of mRNA to the ribosome. Recognizes and binds the 7-methylguanosine-containing mRNA cap during an early step in the initiation of protein synthesis and facilitates ribosome binding by inducing the unwinding of the mRNAs secondary structures. Functionally, (Microbial infection) Not involved in the plum pox virus (PPV) strain D infection process. In Prunus domestica (Garden plum), this protein is Eukaryotic translation initiation factor 4E-1.